Consider the following 364-residue polypeptide: Valine dehydrogenase (364 aa).

The active site involves Lys-91. 191 to 197 (GVGKVGH) contributes to the NAD(+) binding site.

This sequence belongs to the Glu/Leu/Phe/Val dehydrogenases family. Homodimer.

The protein localises to the cytoplasm. It catalyses the reaction L-valine + NAD(+) + H2O = 3-methyl-2-oxobutanoate + NH4(+) + NADH + H(+). The protein operates within amino-acid degradation; L-valine degradation. With respect to regulation, inhibited by pyridoxal 5'-phosphate (PLP). In terms of biological role, oxidative deamination of branched-chain amino acids. Oxidizes L-valine and L-alpha-aminobutyric acid efficiently, and L-alanine and L-isoleucine less efficiently. D-valine and L-glutamate were not substrates for the enzyme. The catabolism of valine is the major source of fatty acid precursors for macrolide biosynthesis and a vital source of antibiotic precursors. In Streptomyces albus (strain ATCC 21838 / DSM 41398 / FERM P-419 / JCM 4703 / NBRC 107858), this protein is Valine dehydrogenase.